Consider the following 175-residue polypeptide: Crossover junction endodeoxyribonuclease RuvC (175 aa).

Catalysis depends on residues D12, E72, and D144. Residues D12, E72, and D144 each coordinate Mg(2+).

This sequence belongs to the RuvC family. In terms of assembly, homodimer which binds Holliday junction (HJ) DNA. The HJ becomes 2-fold symmetrical on binding to RuvC with unstacked arms; it has a different conformation from HJ DNA in complex with RuvA. In the full resolvosome a probable DNA-RuvA(4)-RuvB(12)-RuvC(2) complex forms which resolves the HJ. Requires Mg(2+) as cofactor.

It is found in the cytoplasm. The catalysed reaction is Endonucleolytic cleavage at a junction such as a reciprocal single-stranded crossover between two homologous DNA duplexes (Holliday junction).. In terms of biological role, the RuvA-RuvB-RuvC complex processes Holliday junction (HJ) DNA during genetic recombination and DNA repair. Endonuclease that resolves HJ intermediates. Cleaves cruciform DNA by making single-stranded nicks across the HJ at symmetrical positions within the homologous arms, yielding a 5'-phosphate and a 3'-hydroxyl group; requires a central core of homology in the junction. The consensus cleavage sequence is 5'-(A/T)TT(C/G)-3'. Cleavage occurs on the 3'-side of the TT dinucleotide at the point of strand exchange. HJ branch migration catalyzed by RuvA-RuvB allows RuvC to scan DNA until it finds its consensus sequence, where it cleaves and resolves the cruciform DNA. The protein is Crossover junction endodeoxyribonuclease RuvC of Beijerinckia indica subsp. indica (strain ATCC 9039 / DSM 1715 / NCIMB 8712).